We begin with the raw amino-acid sequence, 331 residues long: tRNA N6-adenosine threonylcarbamoyltransferase (331 aa).

Residues His108 and His112 each contribute to the Fe cation site. Substrate-binding positions include 129-133, Asp161, Glu178, and Ser258; that span reads LVSGG. Residue Asp286 coordinates Fe cation.

Belongs to the KAE1 / TsaD family. Fe(2+) serves as cofactor.

It localises to the cytoplasm. The enzyme catalyses L-threonylcarbamoyladenylate + adenosine(37) in tRNA = N(6)-L-threonylcarbamoyladenosine(37) in tRNA + AMP + H(+). In terms of biological role, required for the formation of a threonylcarbamoyl group on adenosine at position 37 (t(6)A37) in tRNAs that read codons beginning with adenine. Is probably involved in the transfer of the threonylcarbamoyl moiety of threonylcarbamoyl-AMP (TC-AMP) to the N6 group of A37. This chain is tRNA N6-adenosine threonylcarbamoyltransferase, found in Caldivirga maquilingensis (strain ATCC 700844 / DSM 13496 / JCM 10307 / IC-167).